The sequence spans 557 residues: Potassium-transporting ATPase potassium-binding subunit (557 aa).

A run of 12 helical transmembrane segments spans residues 5–25, 63–83, 132–152, 170–190, 253–273, 283–303, 329–349, 356–376, 379–399, 416–436, 484–504, and 526–546; these read GFLLIATFLLVLMVLARPLGS, LCAILGLNMLGLAVLFFMLLG, GLTVQNFLSAASGIAVIFALI, LLRITLWVLAPVALLIALFFI, FVQMLAIFLIPTALCFAFGEV, LLWAMSVIFVICVGVVMWAEV, VLVSSLFAVVTTAASCGAVIA, ALGGMVPMWLMQIGEVVFGGV, GLYGMMLFVLLAVFIAGLMIG, LTALAILVTPTLVLMGAALAM, LLALCMFVGRFGVIIPVMAIA, and LFVGLLIGTVLLVGALTFIPA.

The protein belongs to the KdpA family. In terms of assembly, the system is composed of three essential subunits: KdpA, KdpB and KdpC.

It localises to the cell inner membrane. In terms of biological role, part of the high-affinity ATP-driven potassium transport (or Kdp) system, which catalyzes the hydrolysis of ATP coupled with the electrogenic transport of potassium into the cytoplasm. This subunit binds the periplasmic potassium ions and delivers the ions to the membrane domain of KdpB through an intramembrane tunnel. This Escherichia coli O81 (strain ED1a) protein is Potassium-transporting ATPase potassium-binding subunit.